A 325-amino-acid chain; its full sequence is Germination protease (325 aa).

A propeptide spanning residues 1-7 is cleaved from the precursor; sequence MYNVRTD.

This sequence belongs to the peptidase A25 family. Homotetramer. In terms of processing, autoproteolytically processed. The inactive tetrameric zymogen termed p46 autoprocesses to a smaller form termed p41, which is active only during spore germination.

The enzyme catalyses Endopeptidase action with P4 Glu or Asp, P1 preferably Glu &gt; Asp, P1' hydrophobic and P2' Ala.. Its function is as follows. Initiates the rapid degradation of small, acid-soluble proteins during spore germination. The sequence is that of Germination protease from Clostridium perfringens (strain 13 / Type A).